The chain runs to 496 residues: MACKSTAVRSATRVAPTRRLGMVTGALVALMAGAALLPAAHAQQTQKKSAPLRGIFTTPDASPSQPLLRGTLPGPSTASGAARSQLVDEVVAVVNTDIITRRELLDRADLVERTLQSQNRQVPVRADLLGEVLEQLILERVQAQTAKESGIRVSDADVDRAVESVAQRNNLSVSQLKSKLAQSGLAYDKYREDLRQEILLARLRDREVDSKVQVFDGEIDNFLAQQGGSAASSGVQEYNVAQILVPVAEDASAEQKAAARGKAESLLKQVQGGADFAKLARDSSGAPEAAQGGELGLRPIGRLPAQFANAVVDLKPGQVVDQVIESPAGFHVLKLVDKRAQGTAITAKVAQTQVRHILIKTGPTMSADDARRQLAGLRDRIVHGYDFGDAARRYSQDTSASAGGELGWVSPGQLVPEFEQAMGLLKPGEVSQPVQSQFGLHLIQVEGRREAEVPVDRQRDYARSVIREQKVQAAYEDWLRQLRDSAHVEYRVNRQQ.

Residues 1–42 (MACKSTAVRSATRVAPTRRLGMVTGALVALMAGAALLPAAHA) form the signal peptide. A disordered region spans residues 53–80 (RGIFTTPDASPSQPLLRGTLPGPSTASG). PpiC domains are found at residues 235–337 (VQEY…KLVD) and 349–447 (VAQT…QVEG).

The protein resides in the periplasm. The enzyme catalyses [protein]-peptidylproline (omega=180) = [protein]-peptidylproline (omega=0). Its function is as follows. Chaperone involved in the correct folding and assembly of outer membrane proteins. Recognizes specific patterns of aromatic residues and the orientation of their side chains, which are found more frequently in integral outer membrane proteins. May act in both early periplasmic and late outer membrane-associated steps of protein maturation. The polypeptide is Chaperone SurA (Ralstonia nicotianae (strain ATCC BAA-1114 / GMI1000) (Ralstonia solanacearum)).